A 493-amino-acid chain; its full sequence is Dipeptidase 3 (493 aa).

Residues 1-35 form the signal peptide; it reads MQPAGLEGPRALGLRPLGHRLSLLGVLLLVPSLWV. The span at 41–60 shows a compositional bias: low complexity; sequence TPSPSSAPTTPEASNATTAP. Residues 41–74 are disordered; it reads TPSPSSAPTTPEASNATTAPGIPNDTATSGVTSD. Intrachain disulfides connect Cys-143/Cys-222 and Cys-294/Cys-326. Residue Asn-331 is glycosylated (N-linked (GlcNAc...) asparagine). Ser-462 carries the GPI-anchor amidated serine lipid modification. A propeptide spans 463-493 (removed in mature form); sequence KAPPHPLPGLMATLTSLALILWLCCSGHRAV.

Belongs to the metallo-dependent hydrolases superfamily. Peptidase M19 family. Homodimer; disulfide-linked. Interacts with TEX101; co-localized on the cell surface of spermatocytes, spermatids, and testicular spermatozoa, co-localized only in cytoplasmic droplets of caput and corpus epididymal sperm. As to expression, expressed in testis but not ovary.

The protein resides in the membrane. Its function is as follows. Lacks dipeptidase activity and is unable to hydrolyze cystinyl-bis-glycine. The absence of activity may be due to the inability of serine (instead of aspartate found in DPEP1/2) at position 356 to function as the acid/base catalyst and activate the nucleophilic water/hydroxide. Does not hydrolyze leukotriene D4 (LTD4) into leukotriene E4 (LTE4). Does not hydrolyze the beta-lactam antibiotic imipenem. The polypeptide is Dipeptidase 3 (Dpep3) (Mus musculus (Mouse)).